We begin with the raw amino-acid sequence, 192 residues long: Virion infectivity factor (192 aa).

The segment at 14-17 (DRMR) is interaction with host APOBEC3F; F1-box. The tract at residues 40-44 (YRHHF) is interaction with host APOBEC3G; G-box. Residues 54–72 (EVHIPLETAELVITTYWGL) are interaction with host APOBEC3F and APOBEC3G; FG-box. Positions 74–79 (PGEREW) are interaction with host APOBEC3F; F2-box. The tract at residues 75-114 (GEREWHLGQGVSIEWRQGRYRTQIDPGLADQLIHIYYFDC) is RNA-binding. Thr96 is subject to Phosphothreonine; by host MAP4K1. Zn(2+)-binding residues include His108, Cys114, Cys133, and His139. The HCCH motif signature appears at 108-139 (HIYYFDCFSESAIRKAILGHKISPRCNYQAGH). Ser144 bears the Phosphoserine; by host mark. The BC-box-like motif signature appears at 144-153 (SLQYLALTAL). A multimerization region spans residues 151-164 (TALIAPKKTKPPLP). Positions 151–180 (TALIAPKKTKPPLPSVQKLVEDRWNKPQKT) are SOCS box-like. Residues 164–192 (PSVQKLVEDRWNKPQKTRGHRESHTMNGH) are disordered. Ser165 carries the post-translational modification Phosphoserine; by host MAP4K1. Residues 171-172 (ED) are membrane association. The segment covering 183-192 (HRESHTMNGH) has biased composition (basic and acidic residues). Thr188 carries the phosphothreonine; by host modification.

Belongs to the primate lentivirus group Vif protein family. As to quaternary structure, homomultimer; in vitro and presumably in vivo. Interacts with viral RNA and Pr55Gag precursor; these interactions mediate Vif incorporation into the virion. Interacts with the viral reverse transcriptase. Forms cullin-5-RING E3 ubiquitin-protein ligase complex (ECS complex) by interacting with host CUL5, RBX2, elongin BC complex (ELOB and ELOC) and CBFB/CBF-beta. Within the ECS complex, Vif interacts directly with host CUL5, ELOC and APOBEC (APOBEC3F and APOBEC3G) substrates. The ECS complex also contains some single-stranded RNA (ssRNA) that acts as a glue that bridges Vif with APOBEC (APOBEC3F and APOBEC3G) substrates. Interacts with host UBCE7IP1 isoform 3/ZIN and possibly with SAT. Interacts with host tyrosine kinases HCK and FYN; these interactions may decrease level of phosphorylated APOBEC3G incorporation into virions. Interacts with host ABCE1; this interaction may play a role in protecting viral RNA from damage during viral assembly. Interacts with host MDM2; this interaction targets Vif for degradation by the proteasome. Processed in virion by the viral protease. In terms of processing, highly phosphorylated on serine and threonine residues. Post-translationally, polyubiquitinated and degraded by the proteasome in the presence of APOBEC3G.

The protein resides in the host cytoplasm. It is found in the host cell membrane. The protein localises to the virion. In terms of biological role, counteracts the innate antiviral activity of host APOBEC3F and APOBEC3G by promoting their ubiquitination and degradation. Acts as a substrate recognition component of an E3 ubiquitin-protein ligase complex: mechanistically, Vif hijacks a host cullin-5-RING E3 ubiquitin-protein ligase complex (ECS complex) and the transcription coactivator CBFB/CBF-beta to form an active E3 ubiquitin-protein ligase complex that targets APOBEC3G and APOBEC3F for polyubiquitination, leading to their degradation by the proteasome. Vif interaction with APOBEC3G also blocks its cytidine deaminase activity in a proteasome-independent manner, suggesting a dual inhibitory mechanism. May interact directly with APOBEC3G mRNA in order to inhibit its translation. Association with CBFB/CBF-beta also inhibits the transcription coactivator activity of CBFB/CBF-beta. Seems to play a role in viral morphology by affecting the stability of the viral nucleoprotein core. Finally, Vif also contributes to the G2 cell cycle arrest observed in HIV infected cells. The protein is Virion infectivity factor of Homo sapiens (Human).